Reading from the N-terminus, the 407-residue chain is GTPase Obg (407 aa).

Residues 1–159 (MKFVDEVSIR…RDLKLELKVL (159 aa)) form the Obg domain. The segment at 127–149 (NTRFKSSTNRAPRQTTPGKPGDQ) is disordered. A compositionally biased stretch (polar residues) spans 129–143 (RFKSSTNRAPRQTTP). An OBG-type G domain is found at 160–333 (ADVGLLGLPN…LTRDIMRYLE (174 aa)). Residues 166 to 173 (GLPNAGKS), 191 to 195 (FTTLV), 213 to 216 (DIPG), 283 to 286 (NKCD), and 314 to 316 (SAI) contribute to the GTP site. Residues serine 173 and threonine 193 each coordinate Mg(2+). The disordered stretch occupies residues 376 to 407 (SGVKSVHDIGDDDWDEEDVDDEDGPEIIYVRD). Positions 385–400 (GDDDWDEEDVDDEDGP) are enriched in acidic residues.

The protein belongs to the TRAFAC class OBG-HflX-like GTPase superfamily. OBG GTPase family. As to quaternary structure, monomer. Mg(2+) is required as a cofactor.

The protein localises to the cytoplasm. An essential GTPase which binds GTP, GDP and possibly (p)ppGpp with moderate affinity, with high nucleotide exchange rates and a fairly low GTP hydrolysis rate. Plays a role in control of the cell cycle, stress response, ribosome biogenesis and in those bacteria that undergo differentiation, in morphogenesis control. This chain is GTPase Obg, found in Pseudomonas savastanoi pv. phaseolicola (strain 1448A / Race 6) (Pseudomonas syringae pv. phaseolicola (strain 1448A / Race 6)).